Reading from the N-terminus, the 415-residue chain is Serine hydroxymethyltransferase (415 aa).

(6S)-5,6,7,8-tetrahydrofolate-binding positions include Leu-121 and 125-127 (GHL). Lys-230 is subject to N6-(pyridoxal phosphate)lysine. Residue 355 to 357 (SPF) coordinates (6S)-5,6,7,8-tetrahydrofolate.

It belongs to the SHMT family. Homodimer. It depends on pyridoxal 5'-phosphate as a cofactor.

Its subcellular location is the cytoplasm. It catalyses the reaction (6R)-5,10-methylene-5,6,7,8-tetrahydrofolate + glycine + H2O = (6S)-5,6,7,8-tetrahydrofolate + L-serine. Its pathway is one-carbon metabolism; tetrahydrofolate interconversion. It functions in the pathway amino-acid biosynthesis; glycine biosynthesis; glycine from L-serine: step 1/1. Functionally, catalyzes the reversible interconversion of serine and glycine with tetrahydrofolate (THF) serving as the one-carbon carrier. This reaction serves as the major source of one-carbon groups required for the biosynthesis of purines, thymidylate, methionine, and other important biomolecules. Also exhibits THF-independent aldolase activity toward beta-hydroxyamino acids, producing glycine and aldehydes, via a retro-aldol mechanism. This chain is Serine hydroxymethyltransferase, found in Lactococcus lactis subsp. cremoris (strain MG1363).